The sequence spans 440 residues: Chromosome partition protein MukF (440 aa).

Residues 208 to 236 form a leucine-zipper region; it reads LSETSGTLRELQDTLEAAGDKLQANLLRI.

The protein belongs to the MukF family. Interacts, and probably forms a ternary complex, with MukE and MukB via its C-terminal region. The complex formation is stimulated by calcium or magnesium. It is required for an interaction between MukE and MukB.

It is found in the cytoplasm. The protein localises to the nucleoid. In terms of biological role, involved in chromosome condensation, segregation and cell cycle progression. May participate in facilitating chromosome segregation by condensation DNA from both sides of a centrally located replisome during cell division. Not required for mini-F plasmid partitioning. Probably acts via its interaction with MukB and MukE. Overexpression results in anucleate cells. It has a calcium binding activity. The polypeptide is Chromosome partition protein MukF (Escherichia coli O157:H7).